Here is a 167-residue protein sequence, read N- to C-terminus: CGG triplet repeat-binding protein 1 (167 aa).

Phosphoserine is present on S56. The short motif at 80–84 is the Nuclear localization signal element; sequence RKKQR. At S164 the chain carries Phosphoserine.

Ubiquitous. Highly expressed in placenta, thymus, lymph nodes, cerebellum and cerebral cortex. Low expression in other regions of the brain.

Its subcellular location is the nucleus. Functionally, binds to nonmethylated 5'-d(CGG)(n)-3' trinucleotide repeats in the FMR1 promoter. May play a role in regulating FMR1 promoter. The sequence is that of CGG triplet repeat-binding protein 1 (CGGBP1) from Homo sapiens (Human).